A 387-amino-acid chain; its full sequence is G-protein coupled receptor homolog R33 (387 aa).

Residues 1 to 33 are Extracellular-facing; that stretch reads MDVLLGTEELEDELHQLHFNYTCVPSLGLSVAR. Asparagine 20 carries an N-linked (GlcNAc...) asparagine; by host glycan. Residues 34 to 61 traverse the membrane as a helical segment; that stretch reads DAETAVNFLIVLVGGPMNFLVLATQMLS. The Cytoplasmic segment spans residues 62–71; sequence NRSYSVSTPT. Residues 72–94 traverse the membrane as a helical segment; that stretch reads LYMTNLYLANLLTVATLPFLMLS. Over 95–107 the chain is Extracellular; that stretch reads NRGLVGSSPEGCK. Residues 108 to 129 traverse the membrane as a helical segment; that stretch reads IAALAYYATCTAGFATLMLIAI. Residues 130-150 lie on the Cytoplasmic side of the membrane; that stretch reads NRYRVIHQRTRSGAGSKRQTY. The chain crosses the membrane as a helical span at residues 151–169; sequence AVLAVTWLASLMCASPAPL. The Extracellular portion of the chain corresponds to 170-204; that stretch reads YATVMAHDSADALAFETCIIYFSYDQVKTVLATFK. A helical membrane pass occupies residues 205 to 224; it reads ILITMIWGITPVVMMSWFYV. The Cytoplasmic portion of the chain corresponds to 225–244; that stretch reads FFYRRLKLTSYRRRSQTLTF. A helical transmembrane segment spans residues 245–268; it reads VTTLMLSFLVVQTPFVAIMSYDSY. Residues 269 to 285 lie on the Extracellular side of the membrane; it reads GVLNWPINCDTINKRDA. A helical membrane pass occupies residues 286-309; sequence VSMLARVVPNFHCLLNPVLYAFLG. The Cytoplasmic segment spans residues 310 to 387; the sequence is RDFNKRFILC…PPPPPPPPNC (78 aa). Residues 368 to 387 form a disordered region; the sequence is RLRALGRPPPPPPPPPPPNC. A compositionally biased stretch (pro residues) spans 374–387; sequence RPPPPPPPPPPPNC.

Belongs to the G-protein coupled receptor 1 family.

The protein localises to the host cell membrane. In terms of biological role, plays an important role in vivo, in particular in the dissemination to or replication in the salivary gland. This chain is G-protein coupled receptor homolog R33, found in Rattus.